A 189-amino-acid polypeptide reads, in one-letter code: Interferon alpha-14 (189 aa).

Positions 1–23 are cleaved as a signal peptide; the sequence is MALPFALMMALVVLSCKSSCSLG. 2 disulfides stabilise this stretch: Cys24/Cys122 and Cys52/Cys162. N-linked (GlcNAc...) asparagine glycosylation is present at Asn95.

This sequence belongs to the alpha/beta interferon family.

The protein localises to the secreted. Functionally, produced by macrophages, IFN-alpha have antiviral activities. Interferon stimulates the production of two enzymes: a protein kinase and an oligoadenylate synthetase. The protein is Interferon alpha-14 (IFNA14) of Homo sapiens (Human).